The sequence spans 186 residues: EFFKTFNALIDQNKQLVISADRSPSDLDGVEERIKSRLGWGLVADINETTFELRLGILQAKVEQMNMYVPKDVLEFLARNIKSNIRELEGALNKVTHTSLIGRSMTVESASETLIDLLRSNHRSVTIEEIQKKVAEFFNIKVADMQSNRRLRSLARPRQIAMYFAKKFTQKSLPDIGRNFGGRDHT.

E1 is a region of interest (domain I, interacts with DnaA modulators). A region of interest (domain II) is located at residue E1. The segment at 1–99 (EFFKTFNALI…GALNKVTHTS (99 aa)) is domain III, AAA+ region. The tract at residues 100–186 (LIGRSMTVES…GRNFGGRDHT (87 aa)) is domain IV, binds dsDNA.

The protein belongs to the DnaA family. In terms of assembly, oligomerizes as a right-handed, spiral filament on DNA at oriC.

It is found in the cytoplasm. Functionally, plays an essential role in the initiation and regulation of chromosomal replication. ATP-DnaA binds to the origin of replication (oriC) to initiate formation of the DNA replication initiation complex once per cell cycle. Binds the DnaA box (a 9 base pair repeat at the origin) and separates the double-stranded (ds)DNA. Forms a right-handed helical filament on oriC DNA; dsDNA binds to the exterior of the filament while single-stranded (ss)DNA is stabiized in the filament's interior. The ATP-DnaA-oriC complex binds and stabilizes one strand of the AT-rich DNA unwinding element (DUE), permitting loading of DNA polymerase. After initiation quickly degrades to an ADP-DnaA complex that is not apt for DNA replication. Binds acidic phospholipids. This is Chromosomal replication initiator protein DnaA from Wolbachia sp.